We begin with the raw amino-acid sequence, 308 residues long: D-alanine--D-alanine ligase (308 aa).

In terms of domain architecture, ATP-grasp spans 104–301 (KQIWQGSDLP…FDELCVAILD (198 aa)). An ATP-binding site is contributed by 130–185 (IAELGLPVIIKPVHEGSSVGMSKVEKAEDFAAAIEKATQHDAVVMAEKWITGREFT). Mg(2+) is bound by residues D255, E268, and N270.

Belongs to the D-alanine--D-alanine ligase family. Mg(2+) is required as a cofactor. The cofactor is Mn(2+).

Its subcellular location is the cytoplasm. It carries out the reaction 2 D-alanine + ATP = D-alanyl-D-alanine + ADP + phosphate + H(+). Its pathway is cell wall biogenesis; peptidoglycan biosynthesis. Functionally, cell wall formation. The protein is D-alanine--D-alanine ligase of Acinetobacter baumannii (strain AB307-0294).